We begin with the raw amino-acid sequence, 228 residues long: Lipoprotein-releasing system ATP-binding protein LolD (228 aa).

In terms of domain architecture, ABC transporter spans 8–228; the sequence is LQAKKLVKAY…ELHDGLLRRL (221 aa). Residue 44-51 participates in ATP binding; it reads GASGSGKS.

The protein belongs to the ABC transporter superfamily. Lipoprotein translocase (TC 3.A.1.125) family. The complex is composed of two ATP-binding proteins (LolD) and two transmembrane proteins (LolC and LolE).

Its subcellular location is the cell inner membrane. Part of the ABC transporter complex LolCDE involved in the translocation of mature outer membrane-directed lipoproteins, from the inner membrane to the periplasmic chaperone, LolA. Responsible for the formation of the LolA-lipoprotein complex in an ATP-dependent manner. The sequence is that of Lipoprotein-releasing system ATP-binding protein LolD from Alcanivorax borkumensis (strain ATCC 700651 / DSM 11573 / NCIMB 13689 / SK2).